A 434-amino-acid polypeptide reads, in one-letter code: Glycerol-3-phosphate acyltransferase 3 (434 aa).

Residues 14 to 34 (WLTLVLGFILLPSVFGVSLGI) form a helical membrane-spanning segment. A phosphoserine mark is found at S68 and S77. 2 helical membrane-spanning segments follow: residues 137–157 (ISLRLTMVWVLGVIVRYCVLL) and 161–181 (VTLAFIGISLLVIGTTLVGQL). Positions 229 to 234 (HTSPID) match the HXXXXD motif motif.

This sequence belongs to the 1-acyl-sn-glycerol-3-phosphate acyltransferase family. Widely expressed. Expressed in liver, kidney, testis, brain, heart, skeletal muscle, thyroid, prostate, thymus and placenta. Also expressed lung and adipose tissue.

The protein localises to the endoplasmic reticulum membrane. The catalysed reaction is sn-glycerol 3-phosphate + an acyl-CoA = a 1-acyl-sn-glycero-3-phosphate + CoA. It carries out the reaction a 1-acyl-sn-glycero-3-phosphate + an acyl-CoA = a 1,2-diacyl-sn-glycero-3-phosphate + CoA. The enzyme catalyses dodecanoyl-CoA + sn-glycerol 3-phosphate = 1-dodecanoyl-sn-glycerol 3-phosphate + CoA. It catalyses the reaction sn-glycerol 3-phosphate + hexadecanoyl-CoA = 1-hexadecanoyl-sn-glycero-3-phosphate + CoA. The catalysed reaction is sn-glycerol 3-phosphate + (9Z)-octadecenoyl-CoA = 1-(9Z-octadecenoyl)-sn-glycero-3-phosphate + CoA. It carries out the reaction (9Z,12Z)-octadecadienoyl-CoA + sn-glycerol 3-phosphate = 1-(9Z,12Z)-octadecadienoyl-sn-glycero-3-phosphate + CoA. The enzyme catalyses 1-tetradecanoyl-sn-glycerol 3-phosphate + (9Z)-octadecenoyl-CoA = 1-tetradecanoyl-2-(9Z)-octadecenoyl-sn-glycero-3-phosphate + CoA. It catalyses the reaction 1-hexadecanoyl-sn-glycero-3-phosphate + (9Z)-octadecenoyl-CoA = 1-hexadecanoyl-2-(9Z-octadecenoyl)-sn-glycero-3-phosphate + CoA. The catalysed reaction is 1-(9Z-octadecenoyl)-sn-glycero-3-phosphate + (9Z)-octadecenoyl-CoA = 1,2-di-(9Z-octadecenoyl)-sn-glycero-3-phosphate + CoA. It carries out the reaction 1-(6Z,9Z,12Z-octadecatrienoyl)-sn-glycero-3-phosphate + (9Z)-octadecenoyl-CoA = (6Z,9Z,12Z)-octadecatrienoyl-2-(9Z)-octadecenoyl-sn-glycero-3-phosphate + CoA. The enzyme catalyses 1-(9Z,12Z,15Z)-octadecatrienoyl-sn-glycero-3-phosphate + (9Z)-octadecenoyl-CoA = 1-(9Z,12Z,15Z)-octadecatrienoyl-2-(9Z)-octadecenoyl-sn-glycero-3-phosphate + CoA. It catalyses the reaction 1-(9Z-octadecenoyl)-sn-glycero-3-phosphate + tetradecanoyl-CoA = 1-(9Z)-octadecenoyl-2-tetradecanoyl-sn-glycero-3-phosphate + CoA. The catalysed reaction is 1-(9Z-octadecenoyl)-sn-glycero-3-phosphate + hexadecanoyl-CoA = 1-(9Z)-octadecenoyl-2-hexadecanoyl-sn-glycero-3-phosphate + CoA. It carries out the reaction 1-(9Z-octadecenoyl)-sn-glycero-3-phosphate + octadecanoyl-CoA = 1-(9Z-octadecenoyl)-2-octadecanoyl-sn-glycero-3-phosphate + CoA. The enzyme catalyses 1-(9Z-octadecenoyl)-sn-glycero-3-phosphate + (9Z,12Z)-octadecadienoyl-CoA = 1-(9Z)-octadecenoyl-2-(9Z,12Z)-octadecadienoyl-sn-glycero-3-phosphate + CoA. It catalyses the reaction 1-(5Z,8Z,11Z,14Z-eicosatetraenoyl)-sn-glycero-3-phosphate + (9Z)-octadecenoyl-CoA = 1-(5Z,8Z,11Z,14Z)-eicosatetraenoyl-2-(9Z)-octadecenoyl-sn-glycero-3-phosphate + CoA. Its pathway is glycerolipid metabolism; triacylglycerol biosynthesis. It functions in the pathway phospholipid metabolism; CDP-diacylglycerol biosynthesis; CDP-diacylglycerol from sn-glycerol 3-phosphate: step 1/3. Inhibited by N-ethylmaleimide (NEM). Its function is as follows. Converts glycerol-3-phosphate to 1-acyl-sn-glycerol-3-phosphate (lysophosphatidic acid or LPA) by incorporating an acyl moiety at the sn-1 position of the glycerol backbone. Also converts LPA into 1,2-diacyl-sn-glycerol-3-phosphate (phosphatidic acid or PA) by incorporating an acyl moiety at the sn-2 position of the glycerol backbone. Protects cells against lipotoxicity. This is Glycerol-3-phosphate acyltransferase 3 from Homo sapiens (Human).